The primary structure comprises 547 residues: MQVRFGRRSGQAKESQGMDCFEKEEIPYPPLLPSKVDLQQITIIPHAEWERIRDSLNRLTREAAVLRAERAAKKKMHVKSQELVKHWTNTYAGMKEQKLKAKQKRDEEIEAERKVLDLEEEIYKEGERKKAIESARQCQFHQTERVKRFHSGLLLSRVMKERDVQIQYKKNAVKSDKKWEEQVKLNDEKAFKEDQEKEEKRRRERVALAEDHLKQIEEHKEEEEARKKSEEKDAEEMKRQNLLYEIEMKKNLSKKQEEIDTNRKLLLDNMHNKNIIRAVEQQQQEEEDEKIRKFIKAKKRLIQMRMDKDAETHRLMEERRERINNFLSKLIKEKLDTEDLIIARDISEADAELEKREKEKHEKNQADLKAIAEYRASVMKNKEEEERQRKIEAKEQLQAVLKADKIFQELEKEKSLKVTREKLEIQDAHIQQIAINKYNAKQMKEEELDYWRLTDALTVEKEKEFEKYAREVINFESESTKKYAYPMVKAVQEGVGGGRGPPFVGRGGIRPSYQATDATGVQLPCFKSQGSKYNDFQKSKRRLGFTW.

Coiled-coil stretches lie at residues 50–131, 183–251, and 342–405; these read ERIR…RKKA, VKLN…MKKN, and IARD…KADK. Positions 214–237 are disordered; it reads KQIEEHKEEEEARKKSEEKDAEEM.

In terms of assembly, microtubule inner protein component of sperm flagellar doublet microtubules.

The protein resides in the cytoplasm. The protein localises to the cytoskeleton. It is found in the cilium axoneme. It localises to the flagellum axoneme. In terms of biological role, microtubule inner protein (MIP) part of the dynein-decorated doublet microtubules (DMTs) in cilia axoneme, which is required for motile cilia beating. The chain is Cilia- and flagella- associated protein 210 (Cfap210) from Mus musculus (Mouse).